Reading from the N-terminus, the 117-residue chain is Prefoldin subunit beta (117 aa).

This sequence belongs to the prefoldin subunit beta family. As to quaternary structure, heterohexamer of two alpha and four beta subunits.

It localises to the cytoplasm. Molecular chaperone capable of stabilizing a range of proteins. Seems to fulfill an ATP-independent, HSP70-like function in archaeal de novo protein folding. This chain is Prefoldin subunit beta, found in Methanococcoides burtonii (strain DSM 6242 / NBRC 107633 / OCM 468 / ACE-M).